Reading from the N-terminus, the 368-residue chain is UDP-N-acetylglucosamine--N-acetylmuramyl-(pentapeptide) pyrophosphoryl-undecaprenol N-acetylglucosamine transferase (368 aa).

UDP-N-acetyl-alpha-D-glucosamine contacts are provided by residues threonine 13–glycine 15, asparagine 127, arginine 168, serine 200, isoleucine 254, and glutamine 299.

This sequence belongs to the glycosyltransferase 28 family. MurG subfamily.

It is found in the cell inner membrane. It catalyses the reaction di-trans,octa-cis-undecaprenyl diphospho-N-acetyl-alpha-D-muramoyl-L-alanyl-D-glutamyl-meso-2,6-diaminopimeloyl-D-alanyl-D-alanine + UDP-N-acetyl-alpha-D-glucosamine = di-trans,octa-cis-undecaprenyl diphospho-[N-acetyl-alpha-D-glucosaminyl-(1-&gt;4)]-N-acetyl-alpha-D-muramoyl-L-alanyl-D-glutamyl-meso-2,6-diaminopimeloyl-D-alanyl-D-alanine + UDP + H(+). The protein operates within cell wall biogenesis; peptidoglycan biosynthesis. Its function is as follows. Cell wall formation. Catalyzes the transfer of a GlcNAc subunit on undecaprenyl-pyrophosphoryl-MurNAc-pentapeptide (lipid intermediate I) to form undecaprenyl-pyrophosphoryl-MurNAc-(pentapeptide)GlcNAc (lipid intermediate II). In Parabacteroides distasonis (strain ATCC 8503 / DSM 20701 / CIP 104284 / JCM 5825 / NCTC 11152), this protein is UDP-N-acetylglucosamine--N-acetylmuramyl-(pentapeptide) pyrophosphoryl-undecaprenol N-acetylglucosamine transferase.